Consider the following 282-residue polypeptide: 4-diphosphocytidyl-2-C-methyl-D-erythritol kinase (282 aa).

Residue lysine 9 is part of the active site. 98-108 contacts ATP; it reads PMGGGLGGGSS. Residue aspartate 140 is part of the active site.

It belongs to the GHMP kinase family. IspE subfamily. Homodimer.

It catalyses the reaction 4-CDP-2-C-methyl-D-erythritol + ATP = 4-CDP-2-C-methyl-D-erythritol 2-phosphate + ADP + H(+). Its pathway is isoprenoid biosynthesis; isopentenyl diphosphate biosynthesis via DXP pathway; isopentenyl diphosphate from 1-deoxy-D-xylulose 5-phosphate: step 3/6. Functionally, catalyzes the phosphorylation of the position 2 hydroxy group of 4-diphosphocytidyl-2C-methyl-D-erythritol. The polypeptide is 4-diphosphocytidyl-2-C-methyl-D-erythritol kinase (Salmonella heidelberg (strain SL476)).